The following is a 317-amino-acid chain: Acetylglutamate kinase (317 aa).

Residues 75–76 (GG), arginine 97, and asparagine 196 each bind substrate.

The protein belongs to the acetylglutamate kinase family. ArgB subfamily.

It localises to the cytoplasm. The catalysed reaction is N-acetyl-L-glutamate + ATP = N-acetyl-L-glutamyl 5-phosphate + ADP. It functions in the pathway amino-acid biosynthesis; L-arginine biosynthesis; N(2)-acetyl-L-ornithine from L-glutamate: step 2/4. In terms of biological role, catalyzes the ATP-dependent phosphorylation of N-acetyl-L-glutamate. This Corynebacterium jeikeium (strain K411) protein is Acetylglutamate kinase.